The sequence spans 238 residues: MSQSLIVALDFPGKQDVEQFLRHFEGEELFVKVGMELFYKEGPAIITYLKEKGHKIFLDLKLHDIPNTVKSAMRSLASLDVDMVNVHAAGGSSMMKAAIEGLEEGKQEGKERPICIAVTQLTSTSETMMKKEIGIEKTLEEAVAHYAKLTKESGLDGVVCSTLEVPKLREVCGSEFVTVTPGIRLASDDVNDQVRVATPKRARELGSSYIVVGRSITKAENPLEAYKTVKQQWEGVTV.

Residues Asp10, Lys32, 59 to 68 (DLKLHDIPNT), Thr122, Arg184, Gln193, Gly213, and Arg214 contribute to the substrate site. Lys61 (proton donor) is an active-site residue.

This sequence belongs to the OMP decarboxylase family. Type 1 subfamily. Homodimer.

The enzyme catalyses orotidine 5'-phosphate + H(+) = UMP + CO2. It participates in pyrimidine metabolism; UMP biosynthesis via de novo pathway; UMP from orotate: step 2/2. Functionally, catalyzes the decarboxylation of orotidine 5'-monophosphate (OMP) to uridine 5'-monophosphate (UMP). This is Orotidine 5'-phosphate decarboxylase from Bacillus cereus (strain AH820).